The chain runs to 62 residues: Conotoxin Lt5.5 (62 aa).

The N-terminal stretch at M1–A22 is a signal peptide. A propeptide spanning residues Q23–N48 is cleaved from the precursor.

Belongs to the conotoxin T superfamily. In terms of processing, contains 2 disulfide bonds that can be either 'C1-C3, C2-C4' or 'C1-C4, C2-C3', since these disulfide connectivities have been observed for conotoxins with cysteine framework V (for examples, see AC P0DQQ7 and AC P81755). Expressed by the venom duct.

It is found in the secreted. The polypeptide is Conotoxin Lt5.5 (Conus litteratus (Lettered cone)).